The following is a 378-amino-acid chain: 4-hydroxy-3-methylbut-2-en-1-yl diphosphate synthase (flavodoxin) (378 aa).

Residues C268, C271, C303, and E310 each contribute to the [4Fe-4S] cluster site.

It belongs to the IspG family. Requires [4Fe-4S] cluster as cofactor.

It catalyses the reaction (2E)-4-hydroxy-3-methylbut-2-enyl diphosphate + oxidized [flavodoxin] + H2O + 2 H(+) = 2-C-methyl-D-erythritol 2,4-cyclic diphosphate + reduced [flavodoxin]. The protein operates within isoprenoid biosynthesis; isopentenyl diphosphate biosynthesis via DXP pathway; isopentenyl diphosphate from 1-deoxy-D-xylulose 5-phosphate: step 5/6. Converts 2C-methyl-D-erythritol 2,4-cyclodiphosphate (ME-2,4cPP) into 1-hydroxy-2-methyl-2-(E)-butenyl 4-diphosphate. This chain is 4-hydroxy-3-methylbut-2-en-1-yl diphosphate synthase (flavodoxin), found in Corynebacterium glutamicum (strain ATCC 13032 / DSM 20300 / JCM 1318 / BCRC 11384 / CCUG 27702 / LMG 3730 / NBRC 12168 / NCIMB 10025 / NRRL B-2784 / 534).